The following is a 351-amino-acid chain: Methylthioribose-1-phosphate isomerase (351 aa).

Substrate-binding positions include 51–53 (RGA), Arg94, and Gln199. Catalysis depends on Asp240, which acts as the Proton donor. 250–251 (NK) contributes to the substrate binding site.

The protein belongs to the EIF-2B alpha/beta/delta subunits family. MtnA subfamily. As to quaternary structure, homodimer.

It carries out the reaction 5-(methylsulfanyl)-alpha-D-ribose 1-phosphate = 5-(methylsulfanyl)-D-ribulose 1-phosphate. It participates in amino-acid biosynthesis; L-methionine biosynthesis via salvage pathway; L-methionine from S-methyl-5-thio-alpha-D-ribose 1-phosphate: step 1/6. In terms of biological role, catalyzes the interconversion of methylthioribose-1-phosphate (MTR-1-P) into methylthioribulose-1-phosphate (MTRu-1-P). The sequence is that of Methylthioribose-1-phosphate isomerase from Bacillus thuringiensis subsp. konkukian (strain 97-27).